Here is a 284-residue protein sequence, read N- to C-terminus: Homeobox protein SIX1 (284 aa).

Residues 124 to 183 (GEETSYCFKEKSRGVLREWYAHNPYPSPREKRELAEATGLTTTQVSNWFKNRRQRDRAAE) constitute a DNA-binding region (homeobox). The segment at 168–284 (VSNWFKNRRQ…LTSSLVDLGS (117 aa)) is disordered. Positions 179–190 (DRAAEAKERENT) are enriched in basic and acidic residues. Residues 227–284 (DQNSVLLLQSNMGHARSSNYSLPGLTASQPSHGLQAHQHQLQDSLLGPLTSSLVDLGS) show a composition bias toward polar residues.

This sequence belongs to the SIX/Sine oculis homeobox family. In terms of assembly, interacts with DACH1. Interacts with EYA1. Interacts with EYA2. Interacts with CDH1. Interacts with TBX18. Interacts with CEBPA. Interacts with CEBPB. Interacts with EBF2. Post-translationally, phosphorylated during interphase; becomes hyperphosphorylated during mitosis. Hyperphosphorylation impairs binding to promoter elements. Ubiquitinated by the anaphase promoting complex (APC), leading to its proteasomal degradation. As to expression, expressed in phalangeal tendons and in skeletal muscle and in head and body mesenchyme.

The protein resides in the nucleus. It localises to the cytoplasm. Functionally, transcription factor that is involved in the regulation of cell proliferation, apoptosis and embryonic development. Plays an important role in the development of several organs, including kidney, muscle and inner ear. Depending on context, functions as a transcriptional repressor or activator. Lacks an activation domain, and requires interaction with EYA family members for transcription activation. Mediates nuclear translocation of EYA1 and EYA2. Binds the 5'-TCA[AG][AG]TTNC-3' motif present in the MEF3 element in the MYOG promoter and CIDEA enhancer. Regulates the expression of numerous genes, including MYC, CCNA1, CCND1 and EZR. Acts as an activator of the IGFBP5 promoter, probably coactivated by EYA2. Repression of precursor cell proliferation in myoblasts is switched to activation through recruitment of EYA3 to the SIX1-DACH1 complex. During myogenesis, seems to act together with EYA2 and DACH2. Regulates the expression of CCNA1. Promotes brown adipocyte differentiation. This chain is Homeobox protein SIX1 (Six1), found in Mus musculus (Mouse).